A 365-amino-acid polypeptide reads, in one-letter code: Zinc transporter 7 (365 aa).

An N-terminal signal peptide occupies residues 1–26 (MAYSKACYKLTTITILLLSFTLPSLA). Residues 27–56 (GNAENADVSECKAESGDLSCHNNKEAQKLK) lie on the Extracellular side of the membrane. The chain crosses the membrane as a helical span at residues 57-77 (IIAIPSILVASMIGVSLPLFS). Over 78–90 (RSIPALGPDREMS) the chain is Cytoplasmic. A helical transmembrane segment spans residues 91–111 (VIVKTLASGVILATGFMHVLP). Over 112–129 (DSFDDLTSKCLPEDPWQK) the chain is Extracellular. The helical transmembrane segment at 130-150 (FPFATFITMISALLVLMIESF) threads the bilayer. Residues 151-210 (AMCAYARRTSKREGEVVPLENGSNSVDTQNDIQTLENGSSYVEKQEKVNEDKTSELLRNK) are Cytoplasmic-facing. The helical transmembrane segment at 211–231 (VIAQILELGIVVHSVVIGLAM) threads the bilayer. Topologically, residues 232 to 242 (GASDNKCTVQS) are extracellular. A helical membrane pass occupies residues 243-263 (LIAALCFHQLFEGMGLGGSIL). Residues 264–272 (QAQFKSKTN) are Cytoplasmic-facing. A helical membrane pass occupies residues 273–293 (WTMVFFFSVTTPFGIVLGMAI). At 294-304 (QKIYDETSPTA) the chain is on the extracellular side. Residues 305–325 (LIVVGVLNACSAGLLIYMALV) traverse the membrane as a helical segment. Residues 326-344 (NLLAHEFFGPKIQGNIKLH) lie on the Cytoplasmic side of the membrane. Residues 345–365 (VLGYVATFTGAAGMSLMAKWA) form a helical membrane-spanning segment.

The protein belongs to the ZIP transporter (TC 2.A.5) family.

The protein localises to the cell membrane. In terms of biological role, probably mediates zinc uptake from the rhizosphere. This is Zinc transporter 7 (ZIP7) from Arabidopsis thaliana (Mouse-ear cress).